A 152-amino-acid polypeptide reads, in one-letter code: UPF0266 membrane protein KPN78578_23010 (152 aa).

3 helical membrane passes run 6 to 26 (LVIILFILALLAYAIYDQFIM), 45 to 65 (VDGMIFVGLTAILIYNNITQH), and 67 to 87 (TAITTWLLSVLALMGLYLFWI).

This sequence belongs to the UPF0266 family.

It localises to the cell inner membrane. In Klebsiella pneumoniae subsp. pneumoniae (strain ATCC 700721 / MGH 78578), this protein is UPF0266 membrane protein KPN78578_23010.